Consider the following 491-residue polypeptide: Cobyric acid synthase (491 aa).

The GATase cobBQ-type domain maps to Lys-246–Phe-435. The Nucleophile role is filled by Cys-327. The active site involves His-427.

This sequence belongs to the CobB/CobQ family. CobQ subfamily.

It participates in cofactor biosynthesis; adenosylcobalamin biosynthesis. Its function is as follows. Catalyzes amidations at positions B, D, E, and G on adenosylcobyrinic A,C-diamide. NH(2) groups are provided by glutamine, and one molecule of ATP is hydrogenolyzed for each amidation. The protein is Cobyric acid synthase of Clostridium acetobutylicum (strain ATCC 824 / DSM 792 / JCM 1419 / IAM 19013 / LMG 5710 / NBRC 13948 / NRRL B-527 / VKM B-1787 / 2291 / W).